We begin with the raw amino-acid sequence, 1083 residues long: MDNHGPRYPYPYGQYPYPYPYPAPYRPPSSEPYPPPPTNQYSAPYYPYPPPPYATPPPYASPPPPHQHTSGSHSGPLDYSHNPQPSSLAAAPPEYHRHSFDYQPSPYPYQPQGNFGAYGPPPPHYSYQEPAQYPPPETKPQEPLPPPQQTQGFQEYRRQDCLSTGGTGHDNVSNSGSSYPPVDELLGGLHISTNQPGPSVPQLSSLPSNSWQSRPGDLYGYPNSSFPSNSHLPQLGRVDSSSSYYASTESPHSADMQMTLFGKGSLKVLLLHGNLDIWIYHAKNLPNMDMFHKTLGDMFGRLPGKIEGQLTSKITSDPYVSVSVAGAVIGRTYVMSNSENPVWMQHFYVPVAHHAAEVHFVVKDSDVVGSQLIGLVTIPVEQIYSGAKIEGTYPILNSNGKPCKPGANLSLSIQYTPMDKLSVYHHGVGAGPDYQGVPGTYFPLRKGGTVRLYQDAHVPEGMLPGIRLDNGMSYEHGKCWHDMFDAIRQARRLIYITGWSVWHKVKLIRDKLGPASECTLGELLRSKSQEGVRVLLLIWDDPTSRSILGYKTDGVMATHDEETRRFFKHSSVQVLLCPRNAGKRHSWVKQREVGTIYTHHQKNVIVDADAGGNRRKIIAFVGGLDLCDGRYDTPQHPLFRTLQTIHKDDFHNPTFTGNLSGCPREPWHDLHSKIDGPAAYDVLTNFEERWLKAAKPSGIKKFKTSYDDALLRIDRIPDILGVSDTPTVSENDPEAWHVQIFRSIDSNSVKGFPKDPKDATCKNLVCGKNVLIDMSIHTAYVKAIRAAQHFIYIENQYFIGSSYNWNAHKDIGANNLIPMEIALKIAEKIRANERFAAYIVIPMWPEGVPTGAATQRILYWQHKTIQMMYETIYKALVETGLEGAFSPQDYLNFFCLGNREMVDGIDNSGTGSPSNANTPQALSRKSRRFMVYVHSKGMVVDDEYVVIGSANINQRSMEGTRDTEIAMGAYQPQHTWARKHSGPRGQIYGYRMSLWAEHMATLDDCFTQPESIECVRKVRTMGERNWKQFAAEEVSDMRGHLLKYPVEVDRKGKVRPLPGSETFPDVGGNIVGSFIAIQENLTI.

Composition is skewed to pro residues over residues 26–38, 46–66, and 132–148; these read RPPS…PPPT, YPYP…PPPH, and QYPP…PPPQ. Residues 26–231 are disordered; the sequence is RPPSSEPYPP…PNSSFPSNSH (206 aa). 2 stretches are compositionally biased toward polar residues: residues 191-213 and 222-231; these read ISTN…SWQS and PNSSFPSNSH. The region spanning 252-393 is the C2 domain; the sequence is HSADMQMTLF…YSGAKIEGTY (142 aa). Aspartate 455 lines the Ca(2+) pocket. One can recognise a PLD phosphodiesterase 1 domain in the interval 595 to 630; sequence TIYTHHQKNVIVDADAGGNRRKIIAFVGGLDLCDGR. Active-site residues include histidine 600, lysine 602, and aspartate 607. Histidine 600 contacts a 1,2-diacyl-sn-glycero-3-phosphate. The Ca(2+) site is built by histidine 636 and histidine 668. The a 1,2-diacyl-sn-glycero-3-phosphate site is built by glutamine 796 and histidine 934. The PLD phosphodiesterase 2 domain occupies 929-956; it reads FMVYVHSKGMVVDDEYVVIGSANINQRS. Catalysis depends on residues histidine 934, lysine 936, and aspartate 941. A Ca(2+)-binding site is contributed by glutamate 997.

Belongs to the phospholipase D family. C2-PLD subfamily. Requires Ca(2+) as cofactor. In terms of tissue distribution, expressed in stems, and to a lower amount in leaves, flowers and siliques.

It is found in the cytoplasm. Its subcellular location is the membrane. The catalysed reaction is a 1,2-diacyl-sn-glycero-3-phosphocholine + H2O = a 1,2-diacyl-sn-glycero-3-phosphate + choline + H(+). Inhibited by neomycin. Up-regulated by PIP2 binding. Its function is as follows. Hydrolyzes glycerol-phospholipids at the terminal phosphodiesteric bond to generate phosphatidic acids (PA). Plays an important role in various cellular processes, including phytohormone action, vesicular trafficking, secretion, cytoskeletal arrangement, meiosis, tumor promotion, pathogenesis, membrane deterioration and senescence. Involved in regulating stomatal movement and plant-water status. Can use phosphatidylserine (PS) and phosphatidylethanolamine (PE) as substrates only in the presence of PIP2. Can use phosphatidylcholine (PC), phosphatidylglycerol (PG) or N-acylphosphatidylethanolamine (NAPE) as substrates in the presence of PE and PIP2. Modulates defense responses to bacterial and fungal pathogens. This Arabidopsis thaliana (Mouse-ear cress) protein is Phospholipase D beta 1.